We begin with the raw amino-acid sequence, 281 residues long: Proteasome subunit beta (281 aa).

Positions 1–53 (MEANTRSTGRLPAAFLTPGSSSFMDFLSDQSPEMLPGNRSLPPLQGAVEAPHG) are cleaved as a propeptide — removed in mature form; by autocatalysis. The active-site Nucleophile is T54.

It belongs to the peptidase T1B family. The 20S proteasome core is composed of 14 alpha and 14 beta subunits that assemble into four stacked heptameric rings, resulting in a barrel-shaped structure. The two inner rings, each composed of seven catalytic beta subunits, are sandwiched by two outer rings, each composed of seven alpha subunits. The catalytic chamber with the active sites is on the inside of the barrel. Has a gated structure, the ends of the cylinder being occluded by the N-termini of the alpha-subunits. Is capped by the proteasome-associated ATPase, ARC.

Its subcellular location is the cytoplasm. The enzyme catalyses Cleavage of peptide bonds with very broad specificity.. It functions in the pathway protein degradation; proteasomal Pup-dependent pathway. With respect to regulation, the formation of the proteasomal ATPase ARC-20S proteasome complex, likely via the docking of the C-termini of ARC into the intersubunit pockets in the alpha-rings, may trigger opening of the gate for substrate entry. Interconversion between the open-gate and close-gate conformations leads to a dynamic regulation of the 20S proteasome proteolysis activity. Component of the proteasome core, a large protease complex with broad specificity involved in protein degradation. This is Proteasome subunit beta from Streptomyces griseus subsp. griseus (strain JCM 4626 / CBS 651.72 / NBRC 13350 / KCC S-0626 / ISP 5235).